The sequence spans 615 residues: Proteasome-associated ATPase (615 aa).

The interval 1-27 (MSESERSEASEVFGTSPDSRLSSEDAA) is disordered. Residues 22–99 (SSEDAAELEQ…LREEVDRLGQ (78 aa)) adopt a coiled-coil conformation. 302–307 (GCGKTL) is a binding site for ATP. Residues 614–615 (YL) are docks into pockets in the proteasome alpha-ring.

This sequence belongs to the AAA ATPase family. In terms of assembly, homohexamer. Assembles into a hexameric ring structure that caps the 20S proteasome core. Strongly interacts with the prokaryotic ubiquitin-like protein Pup through a hydrophobic interface; the interacting region of ARC lies in its N-terminal coiled-coil domain. There is one Pup binding site per ARC hexamer ring. Upon ATP-binding, the C-terminus of ARC interacts with the alpha-rings of the proteasome core, possibly by binding to the intersubunit pockets.

The protein operates within protein degradation; proteasomal Pup-dependent pathway. In terms of biological role, ATPase which is responsible for recognizing, binding, unfolding and translocation of pupylated proteins into the bacterial 20S proteasome core particle. May be essential for opening the gate of the 20S proteasome via an interaction with its C-terminus, thereby allowing substrate entry and access to the site of proteolysis. Thus, the C-termini of the proteasomal ATPase may function like a 'key in a lock' to induce gate opening and therefore regulate proteolysis. This chain is Proteasome-associated ATPase, found in Mycolicibacterium vanbaalenii (strain DSM 7251 / JCM 13017 / BCRC 16820 / KCTC 9966 / NRRL B-24157 / PYR-1) (Mycobacterium vanbaalenii).